The sequence spans 92 residues: Large ribosomal subunit protein bL27 (92 aa).

A propeptide spanning residues 1-10 is cleaved from the precursor; sequence MLLQLQIQLF.

This sequence belongs to the bacterial ribosomal protein bL27 family. In terms of processing, the N-terminus is cleaved by ribosomal processing cysteine protease Prp.

This chain is Large ribosomal subunit protein bL27, found in Aster yellows witches'-broom phytoplasma (strain AYWB).